Here is a 128-residue protein sequence, read N- to C-terminus: Small ribosomal subunit protein uS12 (128 aa).

Asp89 carries the 3-methylthioaspartic acid modification.

The protein belongs to the universal ribosomal protein uS12 family. Part of the 30S ribosomal subunit. Contacts proteins S8 and S17. May interact with IF1 in the 30S initiation complex.

In terms of biological role, with S4 and S5 plays an important role in translational accuracy. Interacts with and stabilizes bases of the 16S rRNA that are involved in tRNA selection in the A site and with the mRNA backbone. Located at the interface of the 30S and 50S subunits, it traverses the body of the 30S subunit contacting proteins on the other side and probably holding the rRNA structure together. The combined cluster of proteins S8, S12 and S17 appears to hold together the shoulder and platform of the 30S subunit. The polypeptide is Small ribosomal subunit protein uS12 (Campylobacter jejuni subsp. jejuni serotype O:6 (strain 81116 / NCTC 11828)).